The primary structure comprises 513 residues: Protein disulfide-isomerase (513 aa).

The first 25 residues, 1-25 (MAISKVWISLLLALAVVLSAPAARA), serve as a signal peptide directing secretion. A Thioredoxin 1 domain is found at 26–149 (EEAAAAEEAA…IVEYLKKQVG (124 aa)). Active-site nucleophile residues include Cys-67 and Cys-70. The cysteines at positions 67 and 70 are disulfide-linked. Asn-282 carries N-linked (GlcNAc...) asparagine glycosylation. A Thioredoxin 2 domain is found at 369-488 (FRKSEPIPEA…IVDYIRKNKE (120 aa)). Catalysis depends on nucleophile residues Cys-411 and Cys-414. The cysteines at positions 411 and 414 are disulfide-linked. Over residues 491-507 (GQAAAATEKAAEPAATE) the composition is skewed to low complexity. The tract at residues 491–513 (GQAAAATEKAAEPAATEPLKDEL) is disordered. The Prevents secretion from ER motif lies at 510–513 (KDEL).

It belongs to the protein disulfide isomerase family.

The protein localises to the endoplasmic reticulum lumen. The catalysed reaction is Catalyzes the rearrangement of -S-S- bonds in proteins.. Participates in the folding of proteins containing disulfide bonds, may be involved in glycosylation, prolyl hydroxylation and triglyceride transfer. In Hordeum vulgare (Barley), this protein is Protein disulfide-isomerase (PDI).